Here is a 211-residue protein sequence, read N- to C-terminus: Metalloproteinase inhibitor 3 (211 aa).

Positions 1–23 (MTPWLGLVVLLGSWSLGDWGAEA) are cleaved as a signal peptide. Residue cysteine 24 participates in Zn(2+) binding. Involved in metalloproteinase-binding regions lie at residues 24–27 (CTCS) and 88–89 (ES). Intrachain disulfides connect cysteine 24–cysteine 91, cysteine 26–cysteine 118, cysteine 36–cysteine 143, cysteine 145–cysteine 192, cysteine 150–cysteine 155, and cysteine 163–cysteine 184. One can recognise an NTR domain in the interval 24 to 143 (CTCSPSHPQD…GLNYRYHLGC (120 aa)). A mediates interaction with EFEMP1 region spans residues 105–188 (TGRVYDGKMY…SKHYACIRQK (84 aa)). Asparagine 207 carries an N-linked (GlcNAc...) asparagine glycan.

It belongs to the protease inhibitor I35 (TIMP) family. As to quaternary structure, interacts with EFEMP1. Interacts with KDR.

The protein resides in the secreted. Its subcellular location is the extracellular space. It is found in the extracellular matrix. In terms of biological role, mediates a variety of processes including matrix regulation and turnover, inflammation, and angiogenesis, through reversible inhibition of zinc protease superfamily enzymes, primarily matrix metalloproteinases (MMPs). Regulates extracellular matrix (ECM) remodeling through inhibition of matrix metalloproteinases (MMP) including MMP-1, MMP-2, MMP-3, MMP-7, MMP-9, MMP-13, MMP-14 and MMP-15. Additionally, modulates the processing of amyloid precursor protein (APP) and apolipoprotein E receptor ApoER2 by inhibiting two alpha-secretases ADAM10 and ADAM17. Functions as a tumor suppressor and a potent inhibitor of angiogenesis. Exerts its anti-angiogenic effect by directly interacting with vascular endothelial growth factor (VEGF) receptor-2/KDR, preventing its binding to the VEGFA ligand. Selectively induces apoptosis in angiogenic endothelial cells through a caspase-independent cell death pathway. Mechanistically, inhibits matrix-induced focal adhesion kinase PTK2 tyrosine phosphorylation and association with paxillin/PXN and disrupts the incorporation of ITGB3, PTK2 and PXN into focal adhesion contacts on the matrix. This chain is Metalloproteinase inhibitor 3 (TIMP3), found in Bos taurus (Bovine).